The chain runs to 459 residues: MAP kinase-interacting serine/threonine-protein kinase 2 (459 aa).

A disordered region spans residues 37-67; it reads DFSPQCEARPDMPSSQPIDIPDAKKRGRKKK. A Nuclear localization signal motif is present at residues 60 to 66; that stretch reads KKRGRKK. The residue at position 74 (Ser74) is a Phosphoserine. In terms of domain architecture, Protein kinase spans 84–368; the sequence is QLQEDVLGEG…AAQVLQHPWV (285 aa). ATP contacts are provided by residues 90–98 and Lys113; that span reads LGEGAHARV. Residue 160–162 coordinates staurosporine; it reads EKM. Asp205 acts as the Proton acceptor in catalysis. Residue Glu209 participates in staurosporine binding. Residues Thr244 and Thr249 each carry the phosphothreonine modification. Zn(2+)-binding residues include Cys299, Cys311, and Cys314. Thr379 is subject to Phosphothreonine. A phosphoserine mark is found at Ser431 and Ser434. Positions 438–442 match the MAP kinase binding motif; that stretch reads LAQRR. Ser446 carries the post-translational modification Phosphoserine. Phosphothreonine is present on Thr450.

The protein belongs to the protein kinase superfamily. CAMK Ser/Thr protein kinase family. Interacts with ESR2 and EIF4E in the nucleus. Monomer. Interacts with the C-terminal regions of EIF4G1 and EIF4G2; this interaction is promoted when MAPK pathways are repressed but repressed upon ERK proteins activation. Also binds to dephosphorylated MAPK3/ERK1 and MAPK1/ERK2. Interaction with phosphorylated MAPK3/ERK1 and MAPK1/ERK2 protects it from dephosphorylation and inactivation. The cofactor is Mg(2+). It depends on Zn(2+) as a cofactor. Post-translationally, dual phosphorylation of Thr-244 and Thr-249 activates the kinase. Phosphorylation of Thr-379 activates the kinase. Phosphorylated upon arsenic trioxide As(2)O(3) treatment. Phosphorylated by MAPK1/ERK2, MAPK11 and MAPK14. Dephosphorylated by PP2A. Ubiquitously expressed in all tissues examined, with high levels in skeletal muscle and low levels in brain.

Its subcellular location is the cytoplasm. It localises to the nucleus. The protein localises to the PML body. The catalysed reaction is L-seryl-[protein] + ATP = O-phospho-L-seryl-[protein] + ADP + H(+). It catalyses the reaction L-threonyl-[protein] + ATP = O-phospho-L-threonyl-[protein] + ADP + H(+). Its activity is regulated as follows. Inhibited by CGP57380 and staurosporine. In terms of biological role, serine/threonine-protein kinase that phosphorylates SFPQ/PSF, HNRNPA1 and EIF4E. May play a role in the response to environmental stress and cytokines. Appears to regulate translation by phosphorylating EIF4E, thus increasing the affinity of this protein for the 7-methylguanosine-containing mRNA cap. Required for mediating PP2A-inhibition-induced EIF4E phosphorylation. Triggers EIF4E shuttling from cytoplasm to nucleus. Enhances the formation of EIF4F complex in pachytene spermatocytes, thus promoting mRNA translation during spermatogenesis. Displays a high basal kinase activity. Acts as a mediator of the suppressive effects of IFNgamma on hematopoiesis. Negative regulator for signals that control generation of arsenic trioxide As(2)O(3)-dependent apoptosis and anti-leukemic responses. Involved in anti-apoptotic signaling in response to serum withdrawal. This chain is MAP kinase-interacting serine/threonine-protein kinase 2 (Mknk2), found in Mus musculus (Mouse).